The following is a 465-amino-acid chain: Chromosomal replication initiator protein DnaA (465 aa).

Residues 1–84 form a domain I, interacts with DnaA modulators region; it reads MSLSLWQQCL…RFEVGSKPLV (84 aa). A domain II region spans residues 84–128; sequence VQAISQPAQPHHKQVSAAPQQQVRSAPVRPSWDNSPAQAEHTYRS. Positions 91–120 are disordered; it reads AQPHHKQVSAAPQQQVRSAPVRPSWDNSPA. Positions 129-345 are domain III, AAA+ region; the sequence is NVNPKHTFDN…GALNRVIANA (217 aa). ATP-binding residues include Gly173, Gly175, Lys176, and Thr177. Residues 346–465 are domain IV, binds dsDNA; it reads NFTGRSITID…FSNLIRTLSS (120 aa).

It belongs to the DnaA family. In terms of assembly, oligomerizes as a right-handed, spiral filament on DNA at oriC.

It is found in the cytoplasm. Functionally, plays an essential role in the initiation and regulation of chromosomal replication. ATP-DnaA binds to the origin of replication (oriC) to initiate formation of the DNA replication initiation complex once per cell cycle. Binds the DnaA box (a 9 base pair repeat at the origin) and separates the double-stranded (ds)DNA. Forms a right-handed helical filament on oriC DNA; dsDNA binds to the exterior of the filament while single-stranded (ss)DNA is stabiized in the filament's interior. The ATP-DnaA-oriC complex binds and stabilizes one strand of the AT-rich DNA unwinding element (DUE), permitting loading of DNA polymerase. After initiation quickly degrades to an ADP-DnaA complex that is not apt for DNA replication. Binds acidic phospholipids. In Pectobacterium carotovorum subsp. carotovorum (strain PC1), this protein is Chromosomal replication initiator protein DnaA.